A 332-amino-acid polypeptide reads, in one-letter code: D-alanine--D-alanine ligase (332 aa).

An ATP-grasp domain is found at 112–312 (KRIWRADGLP…YPDLCLRILA (201 aa)). Residue 138–193 (FQELGAPMIVKPSREGSTIGLTKVTSLGQCEQAYRLAAQHDPEVLCEQFIDGDETT) participates in ATP binding. Residues D265, E279, and N281 each contribute to the Mg(2+) site.

It belongs to the D-alanine--D-alanine ligase family. Mg(2+) serves as cofactor. It depends on Mn(2+) as a cofactor.

The protein resides in the cytoplasm. It catalyses the reaction 2 D-alanine + ATP = D-alanyl-D-alanine + ADP + phosphate + H(+). The protein operates within cell wall biogenesis; peptidoglycan biosynthesis. Cell wall formation. The sequence is that of D-alanine--D-alanine ligase from Acidovorax ebreus (strain TPSY) (Diaphorobacter sp. (strain TPSY)).